A 1438-amino-acid polypeptide reads, in one-letter code: DNA polymerase III PolC-type (1438 aa).

In terms of domain architecture, Exonuclease spans Tyr422–Phe578.

It belongs to the DNA polymerase type-C family. PolC subfamily.

The protein resides in the cytoplasm. The enzyme catalyses DNA(n) + a 2'-deoxyribonucleoside 5'-triphosphate = DNA(n+1) + diphosphate. Its function is as follows. Required for replicative DNA synthesis. This DNA polymerase also exhibits 3' to 5' exonuclease activity. The protein is DNA polymerase III PolC-type of Staphylococcus epidermidis (strain ATCC 35984 / DSM 28319 / BCRC 17069 / CCUG 31568 / BM 3577 / RP62A).